The primary structure comprises 364 residues: O-methyltransferase ZRP4 (364 aa).

S-adenosyl-L-methionine-binding residues include Gly-208, Asp-231, Asp-251, Met-252, and Lys-265. His-269 (proton acceptor) is an active-site residue.

The protein belongs to the class I-like SAM-binding methyltransferase superfamily. Cation-independent O-methyltransferase family. COMT subfamily. As to quaternary structure, homodimer. As to expression, accumulates preferentially in the roots and is located predominantly in the region of the endodermis, low levels are seen in the leaves, stems and other shoot organs.

May be involved in the O-methylation of suberin phenylpropanoid precursors. This chain is O-methyltransferase ZRP4 (ZRP4), found in Zea mays (Maize).